Consider the following 193-residue polypeptide: MADVRTHAHQVQVHPLRQHEGGIKVVYPQSGPSSTQVLAVVAGVPVGGTLLTLAGLTLAVSVIGLILAFPLFLIFSPVIVPAAFVIGLAMTGFMASGAIGLTGLSSMSWVLNHIRRVRERIPDELDEAKQRLADMAEYAGQRTKDAGQTIEDKAHDVRESKTYDVRDRDTKGHTASGGDRDTKTTREVRVATT.

Alanine 2 bears the N-acetylalanine mark. The tract at residues 2-39 is polar; it reads ADVRTHAHQVQVHPLRQHEGGIKVVYPQSGPSSTQVLA. 3 consecutive transmembrane segments (helical) span residues 37–57, 66–86, and 87–107; these read VLAV…AGLT, ILAF…AFVI, and GLAM…LSSM. Positions 40–113 are hydrophobic; the sequence is VVAGVPVGGT…LSSMSWVLNH (74 aa). The interval 139-193 is disordered; sequence AGQRTKDAGQTIEDKAHDVRESKTYDVRDRDTKGHTASGGDRDTKTTREVRVATT. Over residues 142 to 193 the composition is skewed to basic and acidic residues; it reads RTKDAGQTIEDKAHDVRESKTYDVRDRDTKGHTASGGDRDTKTTREVRVATT.

The protein belongs to the oleosin family.

The protein localises to the lipid droplet. The protein resides in the membrane. Functionally, may have a structural role to stabilize the lipid body during desiccation of the seed by preventing coalescence of the oil. Probably interacts with both lipid and phospholipid moieties of lipid bodies. May also provide recognition signals for specific lipase anchorage in lipolysis during seedling growth. The chain is Oleosin S1-2 (S1) from Brassica napus (Rape).